The primary structure comprises 2376 residues: Serine/threonine-protein kinase WNK1 (2376 aa).

Disordered stretches follow at residues Met-1–Phe-78 and Glu-93–Asp-201. 2 stretches are compositionally biased toward low complexity: residues Ser-10–Ser-19 and Gly-40–Gly-49. 2 positions are modified to phosphoserine: Ser-15 and Ser-19. The segment covering Arg-50–Arg-66 has biased composition (basic and acidic residues). Position 60 is a phosphothreonine (Thr-60). Low complexity predominate over residues Thr-125–Ala-158. Ser-172 is modified (phosphoserine). In terms of domain architecture, Protein kinase spans Leu-219–Phe-477. Position 229 (Ser-229) interacts with ATP. Chloride contacts are provided by Phe-281 and Leu-297. ATP is bound by residues Thr-299–Met-302 and Lys-349. Asp-366 (proton acceptor) is an active-site residue. Chloride is bound by residues Leu-367 and Leu-369. A phosphoserine; by autocatalysis mark is found at Ser-376 and Ser-380. The tract at residues Glu-486–Ala-553 is autoinhibitory domain. A compositionally biased stretch (basic and acidic residues) spans Gln-571–Ser-586. Disordered regions lie at residues Gln-571–Tyr-641, Ala-701–Thr-799, and Thr-1026–Lys-1118. Composition is skewed to low complexity over residues Leu-587–Gly-601 and Ala-614–Thr-624. The interaction with KLHL3 stretch occupies residues Glu-627 to Gln-637. Low complexity predominate over residues Pro-708–Gln-752. A compositionally biased stretch (polar residues) spans Thr-753–Glu-766. A compositionally biased stretch (pro residues) spans Pro-1045–Thr-1057. Residues Ser-1079–Ser-1089 show a composition bias toward polar residues. Over residues Ile-1097 to Lys-1118 the composition is skewed to basic residues. The RFXV motif 1 signature appears at Arg-1257–Val-1260. Phosphoserine is present on Ser-1261. Disordered regions lie at residues Ser-1459–Ser-1478 and Ser-1734–Glu-1770. Residues Ser-1746–Leu-1756 show a composition bias toward pro residues. An RFXV motif 2 motif is present at residues Arg-1853–Val-1856. Positions Asp-1862–His-1878 are enriched in basic and acidic residues. The interval Asp-1862–Val-1942 is disordered. The span at Ser-1881–Val-1899 shows a compositional bias: low complexity. 2 consecutive short sequence motifs (RFXV motif) follow at residues Arg-1939–Val-1942 and Arg-1951–Val-1954. Phosphoserine occurs at positions 1972, 1996, 2005, 2006, 2021, 2023, and 2026. 2 disordered regions span residues Glu-1991–Lys-2033 and Ala-2110–Thr-2239. Residues Gly-2116–Lys-2128 are compositionally biased toward basic residues. A compositionally biased stretch (low complexity) spans Ser-2129 to Gly-2141. Polar residues-rich tracts occupy residues Leu-2146–Leu-2161 and Glu-2169–Thr-2193. A compositionally biased stretch (low complexity) spans Gly-2207 to Gln-2223. Residues Ala-2224 to Gly-2238 show a composition bias toward polar residues. The amphipathic alpha-helix stretch occupies residues Ser-2235–Ala-2255. 4 positions are modified to phosphoserine: Ser-2264, Ser-2280, Ser-2364, and Ser-2366.

Belongs to the protein kinase superfamily. Ser/Thr protein kinase family. WNK subfamily. In terms of assembly, interacts with WNK3. Interacts with WNK4; inhibiting the activity of WNK4. Interacts with SGK1; promoting its activation. Associates with the mTORC2 complex. Interacts with UVRAG. Interacts (via amphipathic alpha-helix region) with EMC2; promoting the ER membrane protein complex assembly. Requires Mg(2+) as cofactor. In terms of processing, autophosphorylated at Ser-376 and Ser-380, promoting its activity. Autophosphorylation at Ser-380 is inhibited by intracellular calcium. Phosphorylation at Thr-60 increases ability to activate SGK1. Post-translationally, ubiquitinated by the BCR(KLHL3) complex, leading to its degradation. Also ubiquitinated by the BCR(KLHL2) complex.

The protein resides in the cytoplasm. It is found in the nucleus. The protein localises to the cytoskeleton. It localises to the spindle. The catalysed reaction is L-seryl-[protein] + ATP = O-phospho-L-seryl-[protein] + ADP + H(+). It carries out the reaction L-threonyl-[protein] + ATP = O-phospho-L-threonyl-[protein] + ADP + H(+). Activated in response to hyperosmotic stress: cell shrinkage promotes formation of a membraneless compartment that concentrates WNK1 with its substrates, OXSR1/OSR1 and STK39/SPAK. Activation requires autophosphorylation of Ser-380 and, to a lower extent, Ser-376. Autophosphorylation and subsequent activation is inhibited by increases in intracellular ionic strength: Cl(-) potently inhibits WNK1 kinase activity via direct binding. Also inhibited by K(+) ions. Serine/threonine-protein kinase component of the WNK1-SPAK/OSR1 kinase cascade, which acts as a key regulator of blood pressure and regulatory volume increase by promoting ion influx. WNK1 mediates regulatory volume increase in response to hyperosmotic stress by acting as a molecular crowding sensor, which senses cell shrinkage and mediates formation of a membraneless compartment by undergoing liquid-liquid phase separation. The membraneless compartment concentrates WNK1 with its substrates, OXSR1/OSR1 and STK39/SPAK, promoting WNK1-dependent phosphorylation and activation of downstream kinases OXSR1/OSR1 and STK39/SPAK. Following activation, OXSR1/OSR1 and STK39/SPAK catalyze phosphorylation of ion cotransporters SLC12A1/NKCC2, SLC12A2/NKCC1, SLC12A5/KCC2 and SLC12A6/KCC3, regulating their activity. Phosphorylation of Na-K-Cl cotransporters SLC12A2/NKCC1 and SLC12A2/NKCC1 promote their activation and ion influx; simultaneously, phosphorylation of K-Cl cotransporters SLC12A5/KCC2 and SLC12A6/KCC3 inhibit their activity, blocking ion efflux. Also acts as a regulator of angiogenesis in endothelial cells via activation of OXSR1/OSR1 and STK39/SPAK: activation of OXSR1/OSR1 regulates chemotaxis and invasion, while STK39/SPAK regulates endothelial cell proliferation. Also acts independently of the WNK1-SPAK/OSR1 kinase cascade by catalyzing phosphorylation of other substrates, such as SYT2, PCF11 and NEDD4L. Mediates phosphorylation of SYT2, regulating SYT2 association with phospholipids and membrane-binding. Regulates mRNA export in the nucleus by mediating phosphorylation of PCF11, thereby decreasing the association between PCF11 and POLR2A/RNA polymerase II and promoting mRNA export to the cytoplasm. Acts as a negative regulator of autophagy. Required for the abscission step during mitosis, independently of the WNK1-SPAK/OSR1 kinase cascade. May also play a role in actin cytoskeletal reorganization. Also acts as a scaffold protein independently of its protein kinase activity: negatively regulates cell membrane localization of various transporters and channels, such as SLC4A4, SLC26A6, SLC26A9, TRPV4 and CFTR. Involved in the regulation of epithelial Na(+) channel (ENaC) by promoting activation of SGK1 in a kinase-independent manner: probably acts as a scaffold protein that promotes the recruitment of SGK1 to the mTORC2 complex in response to chloride, leading to mTORC2-dependent phosphorylation and activation of SGK1. Acts as an assembly factor for the ER membrane protein complex independently of its protein kinase activity: associates with EMC2 in the cytoplasm via its amphipathic alpha-helix, and prevents EMC2 ubiquitination and subsequent degradation, thereby promoting EMC2 stabilization. In Sus scrofa (Pig), this protein is Serine/threonine-protein kinase WNK1.